A 413-amino-acid polypeptide reads, in one-letter code: Acyltransferase mokF (413 aa).

Monacolin J is bound at residue Arg-93. The active-site Acyl-ester intermediate is the Ser-96. 3 residues coordinate monacolin J: Arg-193, Tyr-208, and Tyr-278. Gly-386 contributes to the 2-methylbutanoate binding site.

This sequence belongs to the class-A beta-lactamase family.

It catalyses the reaction monacolin J carboxylate + (S)-2-methylbutanoyl-[2-methylbutanoate polyketide synthase] = lovastatin carboxylate + holo-[2-methylbutanoate polyketide synthase]. The protein operates within polyketide biosynthesis; lovastatin biosynthesis. Functionally, acyltransferase; part of the gene cluster that mediates the biosynthesis of monakolin K, also known as lovastatin, and which acts as a potent competitive inhibitor of HMG-CoA reductase. Monakolin K biosynthesis is performed in two stages. The first stage is catalyzed by the nonaketide synthase mokA, which belongs to type I polyketide synthases and catalyzes the iterative nine-step formation of the polyketide. This PKS stage is completed by the action of dehydrogenase mokE, which catalyzes the NADPH-dependent reduction of the unsaturated tetra-, penta- and heptaketide intermediates that arise during the mokA-mediated biosynthesis of the nonaketide chain and leads to dihydromonacolin L. Covalently bound dihydromonacolin L is released from mokA by the mokD esterase. Conversion of dihydromonacolin L into monacolin L and then monacolin J is subsequently performed with the participation of molecular oxygen and P450 monoogygenase mokC. Finally, mokF performs the conversion of monacoline J to monacoline K through the addition of the side-chain diketide moiety (2R)-2-methylbutanoate produced by the diketide synthase mokB. This is Acyltransferase mokF from Monascus pilosus (Red mold).